The following is a 317-amino-acid chain: Apolipoprotein E (317 aa).

An N-terminal signal peptide occupies residues 1–18 (MKVLWAALLVTFLAGCQA). 8 repeat units span residues 80 to 101 (ALMDETMKELKAYRSELEEQLT), 102 to 123 (PVAEETRARLSKELQAAQARLG), 124 to 145 (ADMEDVRGRLVQYRGEVQAMLG), 146 to 167 (QSTEELRARLASHLRKLRKRLL), 168 to 189 (RDADDLQKRLAVYQAGAREGAE), 190 to 211 (RGVSAIRERLGPLVEQGRVRAA), 212 to 233 (TVGSLAGQPLQERAQAWGERLR), and 234 to 255 (ARMEEVGGRTRDRLDEVKEQVA). The tract at residues 80 to 255 (ALMDETMKEL…RLDEVKEQVA (176 aa)) is 8 X 22 AA approximate tandem repeats. Position 143 is a methionine sulfoxide (M143). Position 147 is a phosphoserine (S147). The interval 158–168 (HLRKLRKRLLR) is LDL and other lipoprotein receptors binding. 162-165 (LRKR) is a binding site for heparin. The lipid-binding and lipoprotein association stretch occupies residues 210–290 (AATVGSLAGQ…SWFEPLVEDM (81 aa)). 229–236 (GERLRARM) serves as a coordination point for heparin. Positions 266–317 (QQIRLQAEAFQARLKSWFEPLVEDMQRQWAGLVEKVQAAVGTSAAPVPSDNH) are homooligomerization. Residues 278-290 (RLKSWFEPLVEDM) are specificity for association with VLDL.

This sequence belongs to the apolipoprotein A1/A4/E family. As to quaternary structure, homotetramer. May interact with ABCA1; functionally associated with ABCA1 in the biogenesis of HDLs. May interact with APP/A4 amyloid-beta peptide; the interaction is extremely stable in vitro but its physiological significance is unclear. May interact with MAPT. May interact with MAP2. In the cerebrospinal fluid, interacts with secreted SORL1. Interacts with PMEL; this allows the loading of PMEL luminal fragment on ILVs to induce fibril nucleation. APOE exists as multiple glycosylated and sialylated glycoforms within cells and in plasma. The extent of glycosylation and sialylation are tissue and context specific. In terms of processing, glycated in plasma VLDL. Post-translationally, phosphorylated by FAM20C in the extracellular medium.

The protein localises to the secreted. It is found in the extracellular space. The protein resides in the extracellular matrix. Its subcellular location is the extracellular vesicle. It localises to the endosome. The protein localises to the multivesicular body. In terms of biological role, APOE is an apolipoprotein, a protein associating with lipid particles, that mainly functions in lipoprotein-mediated lipid transport between organs via the plasma and interstitial fluids. APOE is a core component of plasma lipoproteins and is involved in their production, conversion and clearance. Apolipoproteins are amphipathic molecules that interact both with lipids of the lipoprotein particle core and the aqueous environment of the plasma. As such, APOE associates with chylomicrons, chylomicron remnants, very low density lipoproteins (VLDL) and intermediate density lipoproteins (IDL) but shows a preferential binding to high-density lipoproteins (HDL). It also binds a wide range of cellular receptors including the LDL receptor/LDLR, the LDL receptor-related proteins LRP1, LRP2 and LRP8 and the very low-density lipoprotein receptor/VLDLR that mediate the cellular uptake of the APOE-containing lipoprotein particles. Finally, APOE also has a heparin-binding activity and binds heparan-sulfate proteoglycans on the surface of cells, a property that supports the capture and the receptor-mediated uptake of APOE-containing lipoproteins by cells. A main function of APOE is to mediate lipoprotein clearance through the uptake of chylomicrons, VLDLs, and HDLs by hepatocytes. APOE is also involved in the biosynthesis by the liver of VLDLs as well as their uptake by peripheral tissues ensuring the delivery of triglycerides and energy storage in muscle, heart and adipose tissues. By participating in the lipoprotein-mediated distribution of lipids among tissues, APOE plays a critical role in plasma and tissues lipid homeostasis. APOE is also involved in two steps of reverse cholesterol transport, the HDLs-mediated transport of cholesterol from peripheral tissues to the liver, and thereby plays an important role in cholesterol homeostasis. First, it is functionally associated with ABCA1 in the biogenesis of HDLs in tissues. Second, it is enriched in circulating HDLs and mediates their uptake by hepatocytes. APOE also plays an important role in lipid transport in the central nervous system, regulating neuron survival and sprouting. This chain is Apolipoprotein E (APOE), found in Hylobates lar (Lar gibbon).